The sequence spans 770 residues: MEEDLKLQPDSETLTTPNSEVGAVELVKHEEENEQVEQDPGYVTPPEDGKEPVAALSEPNYLGGEDDVLLKHIARQSTIVREALKECTQTPLTVEELSRAYEANLFSPRVPPKKQPNGTCETNPRLNFYPVFAVPEALATYHIFFKNQRIPLSCRANRTRGDGLLHLKAGAHIPEIVSLEEVPKIFEGLGKDEKRAANALQKNETENQNVLVELEGDNARLAVLKRTIEVSHFAYPALNLPPKVMRSVMDQVLIKRAEPIDPQQPDLNSEDGQPVVSDDELARWLGTQDPSELQERRKMMMAAVLVTVELECLQRFFANPQTLRKVEESLHYAFRHGYVRQACKISNVELSNLISYMGILHENRLGQNVLHCTLQGEARRDYVRDCIYLFLILTWQTAMGVWQQCLEEQNLQELNKLLVRARRELWTSFDERTVARQLANLIFPERLMQTLQNGLPDFVSQSILQNFRSFVLERSGILPAMSCALPSDFVPLCYRECPPPLWSHCYLLRLANYLAHHSDLMEDSSGDGLLECHCRCNLCTPHRSLVCNTELLSETQVIGTFEIQGPEQQEGASSLKLTPALWTSAYLRKFIPEDYHAHQIKFYEDQSRPPKVPLTACVITQSQILAQLQAIQQARQEFLLKKGHGVYLDPQTGEELNTPSLSAAASCRSQKHATQGKQASHRATAIPAETTKAVGRGGDVGRQPGRGSFRRGGGGADGELGQPRRGGPRGRGGRNHRQRQGTIFQKTRSEPTSENYPAPATATMFTESQP.

2 disordered regions span residues 1 to 20 (MEEDLKLQPDSETLTTPNSE) and 30 to 49 (EEENEQVEQDPGYVTPPEDG). The segment covering 10–19 (DSETLTTPNS) has biased composition (polar residues). Positions 248–312 (VMDQVLIKRA…AVLVTVELEC (65 aa)) are binding to host EIF4G. Residues 315–433 (RFFANPQTLR…ELWTSFDERT (119 aa)) enclose the RRM domain. 2 positions are modified to phosphotyrosine; by host: Y332 and Y647. The tract at residues 661–770 (LSAAASCRSQ…TATMFTESQP (110 aa)) is disordered. Over residues 726–739 (GGPRGRGGRNHRQR) the composition is skewed to basic residues. Residues 742–755 (TIFQKTRSEPTSEN) show a composition bias toward polar residues.

Belongs to the adenoviridae shutoff protein family. As to quaternary structure, monomer. Interacts with hexon protein; this interaction allows chaperoning and trimerization of hexon proteins. Interacts (via N-terminus) with host initiation factor EIF4G (via C-terminus). Interacts (via RRM domain) with viral mRNAs that contain the tripartite leader; this interaction allows ribosome shunting and expression of viral late mRNAs. Might be cleaved by the viral protease. Post-translationally, phosphorylated. Tyrosine phosphorylation enhances preferential binding to tripartite leader mRNAs and allows ribosome shunting. In terms of processing, methylated. Asymmetric dimethylation by host PRMT1 of the Arg/Gly-rich region may regulate shutoff protein binding to hexon and promote the capsid assembly in the nucleus.

The protein resides in the host cytoplasm. Its function is as follows. Protein that inhibits host translation while promoting late viral translation by ribosome shunting. Blocks host cap-dependent translation by binding to eIF4G, displacing MKNK1 from cap initiation complexes and preventing EIF4E phosphorylation. Binds to the tripartite leader sequence of viral late mRNAs and recruits host eIF4G, PABPC1/poly-A binding protein and 40S ribosomes subunits on viral mRNAs, allowing ribosome shunting and efficient translation of late viral mRNAs even though conventional translation via ribosome scanning from the cap has been shut off in the host cell. During assembly, acts as a chaperone protein that helps hexon proteins assembly into trimers. This chain is Shutoff protein, found in Human adenovirus F serotype 40 (HAdV-40).